Here is a 234-residue protein sequence, read N- to C-terminus: Lipoprotein-releasing system ATP-binding protein LolD (234 aa).

The ABC transporter domain maps to 7 to 233; the sequence is LQCINLCKRY…LQHHLTLVGA (227 aa). 43 to 50 is an ATP binding site; that stretch reads GSSGSGKS.

This sequence belongs to the ABC transporter superfamily. Lipoprotein translocase (TC 3.A.1.125) family. In terms of assembly, the complex is composed of two ATP-binding proteins (LolD) and two transmembrane proteins (LolC and LolE).

Its subcellular location is the cell inner membrane. Functionally, part of the ABC transporter complex LolCDE involved in the translocation of mature outer membrane-directed lipoproteins, from the inner membrane to the periplasmic chaperone, LolA. Responsible for the formation of the LolA-lipoprotein complex in an ATP-dependent manner. This Yersinia pestis bv. Antiqua (strain Antiqua) protein is Lipoprotein-releasing system ATP-binding protein LolD.